A 340-amino-acid chain; its full sequence is tRNA-cytidine(32) 2-sulfurtransferase (340 aa).

Residues 74-79 (SGGKDS) carry the PP-loop motif motif. Residues Cys-149, Cys-152, and Cys-240 each coordinate [4Fe-4S] cluster.

It belongs to the TtcA family. As to quaternary structure, homodimer. Mg(2+) is required as a cofactor. Requires [4Fe-4S] cluster as cofactor.

Its subcellular location is the cytoplasm. The enzyme catalyses cytidine(32) in tRNA + S-sulfanyl-L-cysteinyl-[cysteine desulfurase] + AH2 + ATP = 2-thiocytidine(32) in tRNA + L-cysteinyl-[cysteine desulfurase] + A + AMP + diphosphate + H(+). The protein operates within tRNA modification. Functionally, catalyzes the ATP-dependent 2-thiolation of cytidine in position 32 of tRNA, to form 2-thiocytidine (s(2)C32). The sulfur atoms are provided by the cysteine/cysteine desulfurase (IscS) system. This Burkholderia ambifaria (strain MC40-6) protein is tRNA-cytidine(32) 2-sulfurtransferase.